A 314-amino-acid polypeptide reads, in one-letter code: Nitrilase 2 (314 aa).

The CN hydrolase domain maps to 7-269; sequence VTLGVAQAAP…ETLITARVST (263 aa). The Proton acceptor role is filled by Glu47. Lys132 functions as the Proton donor in the catalytic mechanism. Cys166 acts as the Nucleophile in catalysis.

This sequence belongs to the carbon-nitrogen hydrolase superfamily. Nitrilase family.

It catalyses the reaction a nitrile + 2 H2O = a carboxylate + NH4(+). Its function is as follows. Nitrilases catalyze the mild hydrolytic conversion of organonitriles directly to the corresponding carboxylic acids. Catalyzes the production of aryllactic acid derivatives. Mediates the hydrolysis of cyanohydrin to (S)-phenyllactic acid. In Unknown prokaryotic organism, this protein is Nitrilase 2.